The following is a 307-amino-acid chain: MPINVPDGLPAAEILTKEDVFIMEEKRAEHQDIRPLSIVILNLMPNKIITETQILRLLGNSPLQVDITLLYPETHRSKNTPEEYLIKYYQTFDSIKDQKFDGMIITGAPIEQMPFEEVDFWPELQKIMDWSKANVFSTLFICWGAQAGLYHFFGVPKYPLPAKMFGVFPHTLNRRDIRLLRGFDDIFYVPHSRHTEVRKEDIVKVPELEILSESEESGVYLVGTKGGRQIFVTGHSEYDPYTLKAEYDRDISYELPINVPQNYYPGDDPRQTPVVRWRGHSNLLFANWLNYYVYQETPYNLEELGNR.

Residue Cys-142 is the Acyl-thioester intermediate of the active site. Positions 163 and 192 each coordinate substrate. His-235 (proton acceptor) is an active-site residue. Glu-237 is a catalytic residue. Residue Arg-249 coordinates substrate.

It belongs to the MetA family.

It localises to the cytoplasm. It catalyses the reaction L-homoserine + acetyl-CoA = O-acetyl-L-homoserine + CoA. Its pathway is amino-acid biosynthesis; L-methionine biosynthesis via de novo pathway; O-acetyl-L-homoserine from L-homoserine: step 1/1. Transfers an acetyl group from acetyl-CoA to L-homoserine, forming acetyl-L-homoserine. The sequence is that of Homoserine O-acetyltransferase from Desulfitobacterium hafniense (strain DSM 10664 / DCB-2).